The primary structure comprises 227 residues: Interleukin-6 (227 aa).

The N-terminal stretch at 1–22 (MASISYLLAPLVLAAVLQPTAG) is a signal peptide. Residues 24 to 45 (PLDAPTESPAGETSGEEAETGS) form a disordered region. A disulfide bond links Cys-93 and Cys-103.

It belongs to the IL-6 superfamily. In terms of assembly, component of a hexamer of two molecules each of IL6, IL6R and IL6ST; first binds to IL6R to associate with the signaling subunit IL6ST. After induction, highly expressed in spleen. Can also be expressed in kidney after incubation with PHA.

The protein localises to the secreted. In terms of biological role, cytokine with a wide variety of biological functions in immunity, tissue regeneration, and metabolism. Binds to IL6R, then the complex associates to the signaling subunit IL6ST/gp130 to trigger the intracellular IL6-signaling pathway. The interaction with the membrane-bound IL6R and IL6ST stimulates 'classic signaling', whereas the binding of IL6 and soluble IL6R to IL6ST stimulates 'trans-signaling'. Alternatively, 'cluster signaling' occurs when membrane-bound IL6:IL6R complexes on transmitter cells activate IL6ST receptors on neighboring receiver cells. This chain is Interleukin-6 (il6), found in Takifugu rubripes (Japanese pufferfish).